The following is an 89-amino-acid chain: MAHKKAGGSSRNGRDSAGKRLGIKTYGGEHVIPGNIIARQRGTTWHPGLNVGMGTDHTLFAKIEGHVQFRAKGNGRTFVSVLPIVAAAE.

The interval 1–23 (MAHKKAGGSSRNGRDSAGKRLGI) is disordered.

Belongs to the bacterial ribosomal protein bL27 family.

The protein is Large ribosomal subunit protein bL27 of Rhodopseudomonas palustris (strain BisA53).